Consider the following 52-residue polypeptide: Alpha-crystallin B chain (52 aa).

This sequence belongs to the small heat shock protein (HSP20) family. As to quaternary structure, homodimer. Aggregates with homologous proteins, including alpha-A-crystallin and the small heat shock protein HSPB1, to form large heteromeric complexes.

Functionally, may contribute to the transparency and refractive index of the lens. The chain is Alpha-crystallin B chain (CRYAB) from Trachemys scripta elegans (Red-eared slider turtle).